A 247-amino-acid chain; its full sequence is Probable transcriptional regulatory protein SynWH7803_1972 (247 aa).

The protein belongs to the TACO1 family.

Its subcellular location is the cytoplasm. This is Probable transcriptional regulatory protein SynWH7803_1972 from Synechococcus sp. (strain WH7803).